A 262-amino-acid chain; its full sequence is Small ribosomal subunit protein eS1 (262 aa).

This sequence belongs to the eukaryotic ribosomal protein eS1 family. As to quaternary structure, component of the small ribosomal subunit. Mature ribosomes consist of a small (40S) and a large (60S) subunit. The 40S subunit contains about 33 different proteins and 1 molecule of RNA (18S). The 60S subunit contains about 49 different proteins and 3 molecules of RNA (25S, 5.8S and 5S).

It is found in the cytoplasm. In Theileria annulata, this protein is Small ribosomal subunit protein eS1.